Consider the following 218-residue polypeptide: Type II restriction enzyme KpnI (218 aa).

The enzyme catalyses Endonucleolytic cleavage of DNA to give specific double-stranded fragments with terminal 5'-phosphates.. In terms of biological role, a P subtype restriction enzyme that recognizes the double-stranded sequence 5'-GGTACC-3' and cleaves after C-5. In Klebsiella pneumoniae, this protein is Type II restriction enzyme KpnI.